The primary structure comprises 91 residues: Elongation factor 1-beta (91 aa).

The protein belongs to the EF-1-beta/EF-1-delta family.

Its function is as follows. Promotes the exchange of GDP for GTP in EF-1-alpha/GDP, thus allowing the regeneration of EF-1-alpha/GTP that could then be used to form the ternary complex EF-1-alpha/GTP/AAtRNA. This chain is Elongation factor 1-beta, found in Sulfurisphaera tokodaii (strain DSM 16993 / JCM 10545 / NBRC 100140 / 7) (Sulfolobus tokodaii).